A 270-amino-acid polypeptide reads, in one-letter code: Aliphatic sulfonates import ATP-binding protein SsuB (270 aa).

Residues 17–238 (LAANDLRRTF…VRGSHRLAAL (222 aa)) enclose the ABC transporter domain. 49–56 (GRSGCGKS) contributes to the ATP binding site. The tract at residues 250–270 (PGTPPEPEPVAPLPTHLRWAH) is disordered. Residues 251-261 (GTPPEPEPVAP) show a composition bias toward pro residues.

Belongs to the ABC transporter superfamily. Aliphatic sulfonates importer (TC 3.A.1.17.2) family. As to quaternary structure, the complex is composed of two ATP-binding proteins (SsuB), two transmembrane proteins (SsuC) and a solute-binding protein (SsuA).

It localises to the cell inner membrane. It catalyses the reaction ATP + H2O + aliphatic sulfonate-[sulfonate-binding protein]Side 1 = ADP + phosphate + aliphatic sulfonateSide 2 + [sulfonate-binding protein]Side 1.. Part of the ABC transporter complex SsuABC involved in aliphatic sulfonates import. Responsible for energy coupling to the transport system. In Pseudomonas entomophila (strain L48), this protein is Aliphatic sulfonates import ATP-binding protein SsuB.